The sequence spans 357 residues: Holliday junction branch migration complex subunit RuvB (357 aa).

Positions 3 to 193 (WDDTTDAEAA…FGFTAHMEFY (191 aa)) are large ATPase domain (RuvB-L). Residues Leu-32, Arg-33, Gly-74, Lys-77, Thr-78, Thr-79, 140–142 (EDF), Arg-183, Tyr-193, and Arg-230 each bind ATP. Thr-78 provides a ligand contact to Mg(2+). The segment at 194-264 (GPAELERVIH…IAAAALAVYE (71 aa)) is small ATPAse domain (RuvB-S). Residues 267–357 (ARGLDRLDRG…GNGQPDLFGA (91 aa)) are head domain (RuvB-H). DNA is bound by residues Arg-303, Arg-322, and Arg-327. Positions 337–357 (LGLTPPRPQSSGNGQPDLFGA) are disordered.

It belongs to the RuvB family. Homohexamer. Forms an RuvA(8)-RuvB(12)-Holliday junction (HJ) complex. HJ DNA is sandwiched between 2 RuvA tetramers; dsDNA enters through RuvA and exits via RuvB. An RuvB hexamer assembles on each DNA strand where it exits the tetramer. Each RuvB hexamer is contacted by two RuvA subunits (via domain III) on 2 adjacent RuvB subunits; this complex drives branch migration. In the full resolvosome a probable DNA-RuvA(4)-RuvB(12)-RuvC(2) complex forms which resolves the HJ.

Its subcellular location is the cytoplasm. It catalyses the reaction ATP + H2O = ADP + phosphate + H(+). Its function is as follows. The RuvA-RuvB-RuvC complex processes Holliday junction (HJ) DNA during genetic recombination and DNA repair, while the RuvA-RuvB complex plays an important role in the rescue of blocked DNA replication forks via replication fork reversal (RFR). RuvA specifically binds to HJ cruciform DNA, conferring on it an open structure. The RuvB hexamer acts as an ATP-dependent pump, pulling dsDNA into and through the RuvAB complex. RuvB forms 2 homohexamers on either side of HJ DNA bound by 1 or 2 RuvA tetramers; 4 subunits per hexamer contact DNA at a time. Coordinated motions by a converter formed by DNA-disengaged RuvB subunits stimulates ATP hydrolysis and nucleotide exchange. Immobilization of the converter enables RuvB to convert the ATP-contained energy into a lever motion, pulling 2 nucleotides of DNA out of the RuvA tetramer per ATP hydrolyzed, thus driving DNA branch migration. The RuvB motors rotate together with the DNA substrate, which together with the progressing nucleotide cycle form the mechanistic basis for DNA recombination by continuous HJ branch migration. Branch migration allows RuvC to scan DNA until it finds its consensus sequence, where it cleaves and resolves cruciform DNA. This is Holliday junction branch migration complex subunit RuvB from Streptomyces coelicolor (strain ATCC BAA-471 / A3(2) / M145).